The primary structure comprises 222 residues: CEACAM1-like protein UL7 (222 aa).

Asparagine 50, asparagine 56, asparagine 60, asparagine 71, asparagine 105, asparagine 109, asparagine 125, asparagine 132, asparagine 147, asparagine 164, asparagine 168, and asparagine 189 each carry an N-linked (GlcNAc...) asparagine; by host glycan. A helical transmembrane segment spans residues 193-213; sequence LALVGVIVFIALIVVCIMGWW.

This sequence belongs to the RL11 family. In terms of assembly, interacts with host FLT3. In terms of processing, highly glycosylated.

It is found in the secreted. The protein localises to the host cell membrane. Its function is as follows. Plays a role in modulating the host immune response and affecting host cytokine production. Structurally and functionally homolog of host CEACAM1, induces endothelial cell angiogenesis. Ligands for host FLT3 receptor, activates the PI3K/AKT and MAPK/ERK pathways. In turn, triggers hematopoietic progenitor cell and monocyte differentiation leading to virus reactivation. The polypeptide is CEACAM1-like protein UL7 (UL7) (Human cytomegalovirus (strain AD169) (HHV-5)).